Consider the following 386-residue polypeptide: Vesicle-associated protein 2-2 (386 aa).

An N-acetylmethionine modification is found at Met1. Residues 1–363 lie on the Cytoplasmic side of the membrane; sequence MNMPLLDIQP…TKKIVKEVHN (363 aa). In terms of domain architecture, MSP spans 5 to 125; the sequence is LLDIQPRTLQ…EENKLRVTLV (121 aa). Residue Ser279 is modified to Phosphoserine. A coiled-coil region spans residues 300 to 353; it reads ELKLVKDIEEMKLKVDALESKLKQADSTISKLMEERSISSQHRQSLQHELAELR. The helical; Anchor for type IV membrane protein transmembrane segment at 364–384 threads the bilayer; it reads GFPLLYVCVVAFIAYVIGHFL.

Belongs to the VAMP-associated protein (VAP) (TC 9.B.17) family. As to quaternary structure, interacts with cowpea mosaic virus (CPMV) NTP-binding protein (NTB).

It localises to the endoplasmic reticulum membrane. Functionally, may play a role in vesicle trafficking. This chain is Vesicle-associated protein 2-2 (PVA22), found in Arabidopsis thaliana (Mouse-ear cress).